The following is a 647-amino-acid chain: Macrolide export ATP-binding/permease protein MacB 2 (647 aa).

The ABC transporter domain occupies 6–244 (IQLKGIERRY…VTPTAAPAGK (239 aa)). Residue 42-49 (GASGSGKS) participates in ATP binding. Positions 223-247 (QEDSGRKPAAVPVTPTAAPAGKEGV) are disordered. The segment covering 230–242 (PAAVPVTPTAAPA) has biased composition (low complexity). 4 consecutive transmembrane segments (helical) span residues 273–293 (FLTM…VALG), 527–547 (IAVI…LVSV), 581–601 (LGGM…SLFV), and 610–630 (LFSI…FGYL).

The protein belongs to the ABC transporter superfamily. Macrolide exporter (TC 3.A.1.122) family. Homodimer. Part of the tripartite efflux system MacAB-TolC, which is composed of an inner membrane transporter, MacB, a periplasmic membrane fusion protein, MacA, and an outer membrane component, TolC. The complex forms a large protein conduit and can translocate molecules across both the inner and outer membranes. Interacts with MacA.

It is found in the cell inner membrane. In terms of biological role, part of the tripartite efflux system MacAB-TolC. MacB is a non-canonical ABC transporter that contains transmembrane domains (TMD), which form a pore in the inner membrane, and an ATP-binding domain (NBD), which is responsible for energy generation. Confers resistance against macrolides. In Aeromonas hydrophila subsp. hydrophila (strain ATCC 7966 / DSM 30187 / BCRC 13018 / CCUG 14551 / JCM 1027 / KCTC 2358 / NCIMB 9240 / NCTC 8049), this protein is Macrolide export ATP-binding/permease protein MacB 2.